A 252-amino-acid polypeptide reads, in one-letter code: 5'-nucleotidase SurE (252 aa).

A divalent metal cation contacts are provided by aspartate 8, aspartate 9, serine 42, and asparagine 94.

This sequence belongs to the SurE nucleotidase family. A divalent metal cation serves as cofactor.

Its subcellular location is the cytoplasm. It catalyses the reaction a ribonucleoside 5'-phosphate + H2O = a ribonucleoside + phosphate. Functionally, nucleotidase that shows phosphatase activity on nucleoside 5'-monophosphates. The polypeptide is 5'-nucleotidase SurE (Ehrlichia ruminantium (strain Gardel)).